Consider the following 308-residue polypeptide: CD276 antigen homolog (308 aa).

The N-terminal stretch at 1 to 15 (MAALCLLLLLSLAEA) is a signal peptide. Topologically, residues 16–236 (IDLRVPELPV…VTGQHLSFPP (221 aa)) are extracellular. The Ig-like V-type domain occupies 21 to 125 (PELPVIGLLD…VQNSSSASVS (105 aa)). 2 cysteine pairs are disulfide-bonded: cysteine 37–cysteine 112 and cysteine 155–cysteine 210. The region spanning 135–228 (PTLHLEPSEA…DVTHASLTVT (94 aa)) is the Ig-like C2-type domain. Residues 237-257 (LVLWVTVGLSICLLCLLVALA) form a helical membrane-spanning segment. Residues 258 to 308 (CVCRKHLKQTCEEEQENAGNEEHEENGELKTAMQPLKVTSPGEDDDAECLE) are Cytoplasmic-facing. The disordered stretch occupies residues 270-308 (EEQENAGNEEHEENGELKTAMQPLKVTSPGEDDDAECLE). Acidic residues predominate over residues 299 to 308 (GEDDDAECLE).

Belongs to the immunoglobulin superfamily. BTN/MOG family.

Its subcellular location is the membrane. Its function is as follows. Modulates immune responses. This Xenopus laevis (African clawed frog) protein is CD276 antigen homolog (cd276).